Reading from the N-terminus, the 152-residue chain is Maintenance of carboxysome distribution protein B (152 aa).

As to quaternary structure, self-associates, interacts with McdA probably via the C-terminus of both proteins. Homohexamerizes. Probably a trimer of dimers. Interacts with most of the shell components of the carboxysome (CcmK2, CcmK3, CcmK4, CcmL and CcmO, but not CcmP) via its C-terminus.

The protein localises to the carboxysome. McdA and McdB together mediate carboxysome (Cb) spacing, size, ultrastructure and probably inheritance in the cell. Together they prevent Cb aggregation. McdA is an ATPase that forms dynamic gradients on the nucleoid in response to adapter protein McdB, which associates with carboxysomes. The interplay between McdA gradients on the nucleoid and McdB-bound carboxysomes result in the equal spacing of Cbs along the cell length. McdB may have an additional function in cell divison. Stimulates the ATPase activity of McdA, causing McdA to be released from DNA. Overexpression leads to loss of McdA oscillation and formation of large Cb aggregates which colocalize with McdB, as well as diffuse McdB staining in the cytoplasm. Undergoes liquid-liquid phase separation between pH 6.5-7.5 and at concentrations between 1 uM and 167 uM. Forms polar foci upon overexpression in E.coli. Functionally, incorrect positioning (aggregation) of carboxysomes results in reduced CO(2) fixation by encapsulated RuBisCO, which leads to slower growth, cell elongation, asymmetric cell division and an increase in RuBisCO levels. This is Maintenance of carboxysome distribution protein B from Synechococcus elongatus (strain ATCC 33912 / PCC 7942 / FACHB-805) (Anacystis nidulans R2).